Here is a 392-residue protein sequence, read N- to C-terminus: Small ribosomal subunit protein bS1 (392 aa).

S1 motif domains lie at 16–90 (GDKV…LSKR), 108–173 (DEVI…LSRK), 194–262 (GDVI…LSIK), and 279–348 (DDVI…LSIK). Positions 361–380 (ASTTQSYLEDDNDEDKPTLG) are disordered.

The protein belongs to the bacterial ribosomal protein bS1 family.

Functionally, binds mRNA; thus facilitating recognition of the initiation point. It is needed to translate mRNA with a short Shine-Dalgarno (SD) purine-rich sequence. The protein is Small ribosomal subunit protein bS1 (rpsA) of Staphylococcus epidermidis (strain ATCC 35984 / DSM 28319 / BCRC 17069 / CCUG 31568 / BM 3577 / RP62A).